A 679-amino-acid chain; its full sequence is uncharacterized protein (679 aa).

Helical transmembrane passes span 23–41 (YALR…AYYL), 46–65 (PYWA…GGVI), 72–90 (IAGS…GHTL), 94–113 (WLFL…ACAH), 120–142 (YAFQ…IVEI), 157–179 (IVGI…GTAL), 362–381 (WSGV…SIGA), 385–404 (SGPG…SIVA), 411–433 (SLLM…GLMV), 438–455 (LWQF…MQLL), 462–481 (LAGL…AVTN), and 496–515 (AKIV…RPGS).

It belongs to the aromatic acid exporter ArAE (TC 2.A.85) family.

It is found in the cell membrane. This is an uncharacterized protein from Salmonella typhimurium (strain LT2 / SGSC1412 / ATCC 700720).